An 849-amino-acid polypeptide reads, in one-letter code: Autoinducer 1 sensor kinase/phosphatase LuxN (849 aa).

The next 7 helical transmembrane spans lie at 9–29 (IVYAKAISLLATVAVVMMWLF), 41–61 (VIFGTHHAAYIAYSVCIIAWI), 160–180 (SYFFIGLVSFVVLTLVNLVAM), 196–216 (IAGILVFMLSTAVIHLGMTYF), 220–242 (FSLTWLPPALSISEMLFVGYALL), 251–275 (YIAYLALSVLLVCAIFVLPLGAIFI), and 283–301 (WLIAIPICALIGITWQLLY). The 216-residue stretch at 468-683 (SIAHEMRNPL…EFHLYFPVVP (216 aa)) folds into the Histidine kinase domain. Residue His471 is modified to Phosphohistidine; by autocatalysis. The Response regulatory domain occupies 722–835 (TVLIVDDKEV…ALRHVLGNWL (114 aa)). Asp771 bears the 4-aspartylphosphate mark.

It localises to the cell inner membrane. The catalysed reaction is ATP + protein L-histidine = ADP + protein N-phospho-L-histidine.. Functionally, at low cell density, in the absence of AI-1 (autoinducer 1), LuxN has a kinase activity and autophosphorylates on His-471. The phosphoryl group is then transferred on Asp-771 of the response regulator domain. The phosphoryl group is transferred to LuxU, and ultimately to LuxO. At high cell density, in the presence of AI-1, the kinase activity is inactivated, and the response regulator domain has a phosphatase activity. LuxN phosphatase acts on itself. As LuxU could function to establish an equilibrium between the aspartyl-phosphate of LuxN and the aspartyl-phosphate of LuxO, LuxU transfers phosphate from LuxO to LuxN and finally phosphate is drained from the system. The chain is Autoinducer 1 sensor kinase/phosphatase LuxN (luxN) from Vibrio harveyi (Beneckea harveyi).